A 197-amino-acid chain; its full sequence is Probable UbiX-like flavin prenyltransferase (197 aa).

FMN is bound by residues 9–11, Ser-36, 87–90, and Arg-122; these read GAT and SMKT.

This sequence belongs to the UbiX/PAD1 family. YclB subfamily. As to quaternary structure, homododecamer.

It carries out the reaction dimethylallyl phosphate + FMNH2 = prenylated FMNH2 + phosphate. Functionally, flavin prenyltransferase that catalyzes the synthesis of the prenylated FMN cofactor (prenyl-FMN) for phenolic acid decarboxylase C. Involved in the decarboxylation and detoxification of phenolic derivatives under both aerobic and anaerobic conditions. The polypeptide is Probable UbiX-like flavin prenyltransferase (ecdB) (Escherichia coli O111:H-).